A 237-amino-acid polypeptide reads, in one-letter code: Uridylate kinase (237 aa).

9–12 (KLSG) is an ATP binding site. The interval 17-22 (GTQGYG) is involved in allosteric activation by GTP. Residue G51 participates in UMP binding. ATP contacts are provided by G52 and R56. Residues D71 and 132–139 (CGNPFFTT) contribute to the UMP site. T159, Y165, and D168 together coordinate ATP.

Belongs to the UMP kinase family. In terms of assembly, homohexamer.

It localises to the cytoplasm. It catalyses the reaction UMP + ATP = UDP + ADP. It functions in the pathway pyrimidine metabolism; CTP biosynthesis via de novo pathway; UDP from UMP (UMPK route): step 1/1. Its activity is regulated as follows. Allosterically activated by GTP. Inhibited by UTP. Catalyzes the reversible phosphorylation of UMP to UDP. The protein is Uridylate kinase of Parasynechococcus marenigrum (strain WH8102).